A 913-amino-acid polypeptide reads, in one-letter code: Protein translocase subunit SecA (913 aa).

Residues Q87, 105 to 109, and D512 contribute to the ATP site; that span reads GEGKT. Residues C897, C899, C908, and H909 each contribute to the Zn(2+) site.

It belongs to the SecA family. As to quaternary structure, monomer and homodimer. Part of the essential Sec protein translocation apparatus which comprises SecA, SecYEG and auxiliary proteins SecDF-YajC and YidC. It depends on Zn(2+) as a cofactor.

It is found in the cell inner membrane. Its subcellular location is the cytoplasm. It catalyses the reaction ATP + H2O + cellular proteinSide 1 = ADP + phosphate + cellular proteinSide 2.. Functionally, part of the Sec protein translocase complex. Interacts with the SecYEG preprotein conducting channel. Has a central role in coupling the hydrolysis of ATP to the transfer of proteins into and across the cell membrane, serving both as a receptor for the preprotein-SecB complex and as an ATP-driven molecular motor driving the stepwise translocation of polypeptide chains across the membrane. The sequence is that of Protein translocase subunit SecA from Pseudomonas savastanoi pv. phaseolicola (strain 1448A / Race 6) (Pseudomonas syringae pv. phaseolicola (strain 1448A / Race 6)).